The chain runs to 335 residues: Serpentine receptor class alpha-25 (335 aa).

The next 5 membrane-spanning stretches (helical) occupy residues 22-42 (IPVK…FYFA), 151-171 (LLII…YGVP), 195-215 (FRTV…YLSV), 245-265 (CILI…VNYI), and 280-300 (LAPF…VIYF).

This sequence belongs to the nematode receptor-like protein sra family.

The protein resides in the membrane. In Caenorhabditis elegans, this protein is Serpentine receptor class alpha-25 (sra-25).